A 279-amino-acid chain; its full sequence is MTARMDKRFAELKAEGRPALVTYFMGGDPDYDTSLGIMKALPEAGSDIIELGMPFSDPMADGPAIQLAGQRALKGGQTLKKTLQLAADFRKTNDATPIVMMGYYNPIYIYGVEKFLDDALLAGIDGLIVVDLPPEMDDELCIPAIRKGINFIRLATPTTDEKRLPKVLKNTSGFVYYVSMNGITGSALPDPSLVSGAVERIKQHTKLPVCVGFGVKTAEHAKVIGGSADGVVVGTAIVNQVATSLTHDGKATADTVQAVATLVRGLSTGTRSARLVAAE.

Catalysis depends on proton acceptor residues glutamate 50 and aspartate 61.

It belongs to the TrpA family. Tetramer of two alpha and two beta chains.

It catalyses the reaction (1S,2R)-1-C-(indol-3-yl)glycerol 3-phosphate + L-serine = D-glyceraldehyde 3-phosphate + L-tryptophan + H2O. The protein operates within amino-acid biosynthesis; L-tryptophan biosynthesis; L-tryptophan from chorismate: step 5/5. The alpha subunit is responsible for the aldol cleavage of indoleglycerol phosphate to indole and glyceraldehyde 3-phosphate. The chain is Tryptophan synthase alpha chain from Rhizobium johnstonii (strain DSM 114642 / LMG 32736 / 3841) (Rhizobium leguminosarum bv. viciae).